Consider the following 206-residue polypeptide: N-(5'-phosphoribosyl)anthranilate isomerase (206 aa).

Belongs to the TrpF family.

It carries out the reaction N-(5-phospho-beta-D-ribosyl)anthranilate = 1-(2-carboxyphenylamino)-1-deoxy-D-ribulose 5-phosphate. Its pathway is amino-acid biosynthesis; L-tryptophan biosynthesis; L-tryptophan from chorismate: step 3/5. The protein is N-(5'-phosphoribosyl)anthranilate isomerase of Rubrobacter xylanophilus (strain DSM 9941 / JCM 11954 / NBRC 16129 / PRD-1).